Here is a 415-residue protein sequence, read N- to C-terminus: L-cysteine:1D-myo-inositol 2-amino-2-deoxy-alpha-D-glucopyranoside ligase (415 aa).

C43 contributes to the Zn(2+) binding site. L-cysteinyl-5'-AMP contacts are provided by residues 43 to 46, T58, and 81 to 83; these read CGIT and NVT. Positions 45–55 match the 'HIGH' region motif; that stretch reads ITPYDATHLGH. A 'ERGGDP' region motif is present at residues 187-192; that stretch reads ERGGDP. L-cysteinyl-5'-AMP is bound at residue W227. C231 contributes to the Zn(2+) binding site. 249 to 251 contacts L-cysteinyl-5'-AMP; sequence GSD. Zn(2+) is bound at residue H256. I283 is a binding site for L-cysteinyl-5'-AMP. The 'KMSKS' region signature appears at 289-293; that stretch reads KMSKS.

This sequence belongs to the class-I aminoacyl-tRNA synthetase family. MshC subfamily. In terms of assembly, monomer. Zn(2+) serves as cofactor.

The enzyme catalyses 1D-myo-inositol 2-amino-2-deoxy-alpha-D-glucopyranoside + L-cysteine + ATP = 1D-myo-inositol 2-(L-cysteinylamino)-2-deoxy-alpha-D-glucopyranoside + AMP + diphosphate + H(+). In terms of biological role, catalyzes the ATP-dependent condensation of GlcN-Ins and L-cysteine to form L-Cys-GlcN-Ins. The chain is L-cysteine:1D-myo-inositol 2-amino-2-deoxy-alpha-D-glucopyranoside ligase from Saccharomonospora viridis (strain ATCC 15386 / DSM 43017 / JCM 3036 / CCUG 5913 / NBRC 12207 / NCIMB 9602 / P101) (Thermoactinomyces viridis).